The sequence spans 297 residues: Putative lipid kinase MamU (297 aa).

The DAGKc domain maps to 43-131; it reads EGKDMGRMVR…MDVGRVNDRY (89 aa). An ATP-binding site is contributed by 68 to 74; sequence GDGSLSR. The Proton acceptor role is filled by glutamate 274.

This sequence belongs to the diacylglycerol/lipid kinase family.

Its subcellular location is the cytoplasm. In terms of biological role, might phosphorylate lipids. This is Putative lipid kinase MamU from Magnetospirillum gryphiswaldense (strain DSM 6361 / JCM 21280 / NBRC 15271 / MSR-1).